The following is a 478-amino-acid chain: Probable sodium/glutamine symporter GlnT (478 aa).

Transmembrane regions (helical) follow at residues 14–34, 85–105, 145–165, 185–205, 211–231, 236–256, 298–318, 342–362, 381–401, and 411–431; these read DLLW…YFTF, IAIA…IIAI, WMGA…FNSV, LGLI…KRIA, IVVV…FSNI, GVLA…GGAL, AFGV…IILF, GSWA…CALI, LIFV…VAKV, and FMGL…KVVF.

It belongs to the alanine or glycine:cation symporter (AGCS) (TC 2.A.25) family.

The protein resides in the cell membrane. Functionally, probably functions as a sodium/glutamine symporter for glutamine uptake. The polypeptide is Probable sodium/glutamine symporter GlnT (glnT) (Bacillus subtilis (strain 168)).